We begin with the raw amino-acid sequence, 89 residues long: Small ribosomal subunit protein uS15 (89 aa).

The protein belongs to the universal ribosomal protein uS15 family. Part of the 30S ribosomal subunit. Forms a bridge to the 50S subunit in the 70S ribosome, contacting the 23S rRNA.

Its function is as follows. One of the primary rRNA binding proteins, it binds directly to 16S rRNA where it helps nucleate assembly of the platform of the 30S subunit by binding and bridging several RNA helices of the 16S rRNA. Functionally, forms an intersubunit bridge (bridge B4) with the 23S rRNA of the 50S subunit in the ribosome. In Bifidobacterium longum subsp. infantis (strain ATCC 15697 / DSM 20088 / JCM 1222 / NCTC 11817 / S12), this protein is Small ribosomal subunit protein uS15.